The sequence spans 189 residues: Alanine and glycine-rich protein (189 aa).

The span at 127-160 shows a compositional bias: gly residues; that stretch reads AGAGGGSGGGGGGGSGSGGSGGSGGSGGSGGNDG. Residues 127–170 are disordered; that stretch reads AGAGGGSGGGGGGGSGSGGSGGSGGSGGSGGNDGNDGNDGSSSR.

In terms of tissue distribution, component of the organic matrix of calcified shell layers like nacre and prisms.

Its subcellular location is the secreted. The sequence is that of Alanine and glycine-rich protein from Mytilus californianus (California mussel).